Reading from the N-terminus, the 388-residue chain is Formate-dependent phosphoribosylglycinamide formyltransferase (388 aa).

N(1)-(5-phospho-beta-D-ribosyl)glycinamide-binding positions include Glu21–Leu22 and Glu81. Residues Arg113, Lys154, Ser159 to Gln164, Glu193 to Ile196, and Glu201 contribute to the ATP site. The 189-residue stretch at Lys118–Leu306 folds into the ATP-grasp domain. Positions 265 and 277 each coordinate Mg(2+). N(1)-(5-phospho-beta-D-ribosyl)glycinamide contacts are provided by residues Asp284, Lys352, and Arg359–Arg360.

This sequence belongs to the PurK/PurT family. As to quaternary structure, homodimer.

It carries out the reaction N(1)-(5-phospho-beta-D-ribosyl)glycinamide + formate + ATP = N(2)-formyl-N(1)-(5-phospho-beta-D-ribosyl)glycinamide + ADP + phosphate + H(+). Its pathway is purine metabolism; IMP biosynthesis via de novo pathway; N(2)-formyl-N(1)-(5-phospho-D-ribosyl)glycinamide from N(1)-(5-phospho-D-ribosyl)glycinamide (formate route): step 1/1. In terms of biological role, involved in the de novo purine biosynthesis. Catalyzes the transfer of formate to 5-phospho-ribosyl-glycinamide (GAR), producing 5-phospho-ribosyl-N-formylglycinamide (FGAR). Formate is provided by PurU via hydrolysis of 10-formyl-tetrahydrofolate. The chain is Formate-dependent phosphoribosylglycinamide formyltransferase from Nitratiruptor sp. (strain SB155-2).